Consider the following 187-residue polypeptide: MGNKQTIFTEEQLDNYQDCTFFNKKDILKLHARFYELAPNLVPMDYRKSPIVHVPMSLIIQMPELRENPFKERIVEAFSEDGEGNLTFNDFVDMFSVLCESAPRELKANYAFKIYDFNTDNFICKEDLELTLARLTKSELDEDEVVLVCDKVIEEADLDGDGKLGFADFEDMIAKAPDFLSTFHIRI.

EF-hand domains are found at residues 66-101, 103-138, and 144-179; these read RENPFKERIVEAFSEDGEGNLTFNDFVDMFSVLCES, PRELKANYAFKIYDFNTDNFICKEDLELTLARLTKS, and EVVLVCDKVIEEADLDGDGKLGFADFEDMIAKAPDF. The Ca(2+) site is built by aspartate 116, asparagine 118, aspartate 120, aspartate 127, aspartate 157, aspartate 159, aspartate 161, lysine 163, and aspartate 168.

In terms of assembly, monomer. Homodimer. Interacts with WHRN and MYO7A. Interacts with ITGA2B (via C-terminus cytoplasmic tail region); the interactions are stabilized/increased in a calcium and magnesium-dependent manner. Interacts with ITGA7 (via C-terminus cytoplasmic tail region); the interactions are stabilized/increased in a calcium and magnesium-dependent manner. Interacts with TMC1. Interacts with TMC2.

Its subcellular location is the cytoplasm. The protein resides in the cell projection. The protein localises to the stereocilium. It localises to the photoreceptor inner segment. It is found in the cilium. Its subcellular location is the photoreceptor outer segment. The protein resides in the cell membrane. The protein localises to the sarcolemma. In terms of biological role, calcium- and integrin-binding protein that plays a role in intracellular calcium homeostasis. Acts as an auxiliary subunit of the sensory mechanoelectrical transduction (MET) channel in hair cells. Essential for mechanoelectrical transduction (MET) currents in auditory hair cells and thereby required for hearing. Regulates the function of hair cell mechanotransduction by controlling the distribution of transmembrane channel-like proteins TMC1 and TMC2, and by regulating the function of the MET channels in hair cells. Required for the maintenance of auditory hair cell stereocilia bundle morphology and function and for hair-cell survival in the cochlea. Critical for proper photoreceptor cell maintenance and function. Plays a role in intracellular calcium homeostasis by decreasing ATP-induced calcium release. This is Calcium and integrin-binding family member 2 (Cib2) from Rattus norvegicus (Rat).